We begin with the raw amino-acid sequence, 871 residues long: Ubiquitin carboxyl-terminal hydrolase 8 (871 aa).

The region spanning 4–99 (TSPDESPDST…GETGEASVSG (96 aa)) is the DUSP domain. The USP domain maps to 279–869 (TGLQNLGNTC…AAYVLFYKRL (591 aa)). Cys-288 functions as the Nucleophile in the catalytic mechanism. The tract at residues 615 to 650 (ENLENPTEEEATDKTDTDGTTSVEDTNSTDVKETTE) is disordered. His-828 functions as the Proton acceptor in the catalytic mechanism.

The protein belongs to the peptidase C19 family.

It carries out the reaction Thiol-dependent hydrolysis of ester, thioester, amide, peptide and isopeptide bonds formed by the C-terminal Gly of ubiquitin (a 76-residue protein attached to proteins as an intracellular targeting signal).. Functionally, recognizes and hydrolyzes the peptide bond at the C-terminal Gly of ubiquitin. Involved in the processing of poly-ubiquitin precursors as well as that of ubiquitinated proteins. The polypeptide is Ubiquitin carboxyl-terminal hydrolase 8 (UBP8) (Arabidopsis thaliana (Mouse-ear cress)).